Consider the following 503-residue polypeptide: Arabinose import ATP-binding protein AraG 1 (503 aa).

ABC transporter domains follow at residues 5–240 (LRFD…MVGR) and 251–497 (RALG…LPQT). 37-44 (GENGAGKS) lines the ATP pocket.

This sequence belongs to the ABC transporter superfamily. Arabinose importer (TC 3.A.1.2.2) family. In terms of assembly, the complex is composed of two ATP-binding proteins (AraG), two transmembrane proteins (AraH) and a solute-binding protein (AraF).

The protein localises to the cell inner membrane. It carries out the reaction L-arabinose(out) + ATP + H2O = L-arabinose(in) + ADP + phosphate + H(+). In terms of biological role, part of the ABC transporter complex AraFGH involved in arabinose import. Responsible for energy coupling to the transport system. In Burkholderia ambifaria (strain ATCC BAA-244 / DSM 16087 / CCUG 44356 / LMG 19182 / AMMD) (Burkholderia cepacia (strain AMMD)), this protein is Arabinose import ATP-binding protein AraG 1.